A 718-amino-acid polypeptide reads, in one-letter code: 1-deoxy-D-xylulose-5-phosphate synthase 1, chloroplastic (718 aa).

The transit peptide at 1 to 55 directs the protein to the chloroplast; sequence MAFCALSFPAHISRATTPAPSDLQKSSSFSSRFYWGADLLRPSQYKVRKIQSGVY. Residues H143 and 184–186 each bind thiamine diphosphate; that span reads GHS. A Mg(2+)-binding site is contributed by D215. Residues 216 to 217, N244, Y365, and E447 contribute to the thiamine diphosphate site; that span reads GA. Residue N244 coordinates Mg(2+).

The protein belongs to the transketolase family. DXPS subfamily. Homodimer. Requires Mg(2+) as cofactor. It depends on thiamine diphosphate as a cofactor. Expressed in trichomes, leaves, flowers, roots and stems.

The protein resides in the plastid. It is found in the chloroplast. It catalyses the reaction D-glyceraldehyde 3-phosphate + pyruvate + H(+) = 1-deoxy-D-xylulose 5-phosphate + CO2. The protein operates within metabolic intermediate biosynthesis; 1-deoxy-D-xylulose 5-phosphate biosynthesis; 1-deoxy-D-xylulose 5-phosphate from D-glyceraldehyde 3-phosphate and pyruvate: step 1/1. Catalyzes the acyloin condensation reaction between C atoms 2 and 3 of pyruvate and glyceraldehyde 3-phosphate to yield 1-deoxy-D-xylulose-5-phosphate (DXP). The polypeptide is 1-deoxy-D-xylulose-5-phosphate synthase 1, chloroplastic (Cannabis sativa (Hemp)).